The primary structure comprises 228 residues: MAPPTAAPEPNTVPETSPTGHRMFSRIRLATPTDVPFIHKLIHQMAVFERLTHLFVATESGLASTLFNSRPFQAVTVFLLEISPSPFPTTHDASSPDFTPFLETHKVDLPIEDPDREKFLPDKLNDVVVAGFVLFFPNYPSFLAKQGFYIEDIFMREPYRRKGFGKLLLTAVAKQAVKLGVGRVEWIVIDWNVNAINFYEQMGAQVFKEWRLCRLTGDALQAIDKLNI.

The segment at 1–21 is disordered; that stretch reads MAPPTAAPEPNTVPETSPTGH. The N-acetyltransferase domain occupies 77–227; the sequence is VFLLEISPSP…DALQAIDKLN (151 aa). Acetyl-CoA-binding positions include 153–155, 161–166, 192–195, and Y199; these read IFM, RKGFGK, and NVNA.

This sequence belongs to the acetyltransferase family.

Acetyltransferase that converts ornithine to N5-acetylornithine, which is likely used in plant defense. The polypeptide is L-ornithine N5-acetyltransferase NATA1 (NATA1) (Arabidopsis thaliana (Mouse-ear cress)).